Here is a 158-residue protein sequence, read N- to C-terminus: GTP-dependent dephospho-CoA kinase (158 aa).

Residues Asp-35, Ile-36, Val-37, Asp-54, Lys-56, Glu-109, and Asp-132 each contribute to the GTP site.

The protein belongs to the GTP-dependent DPCK family.

It catalyses the reaction 3'-dephospho-CoA + GTP = GDP + CoA + H(+). Its pathway is cofactor biosynthesis; coenzyme A biosynthesis. In terms of biological role, catalyzes the GTP-dependent phosphorylation of the 3'-hydroxyl group of dephosphocoenzyme A to form coenzyme A (CoA). In Methanocaldococcus jannaschii (strain ATCC 43067 / DSM 2661 / JAL-1 / JCM 10045 / NBRC 100440) (Methanococcus jannaschii), this protein is GTP-dependent dephospho-CoA kinase.